Here is a 130-residue protein sequence, read N- to C-terminus: S-adenosylmethionine decarboxylase proenzyme (130 aa).

The Schiff-base intermediate with substrate; via pyruvic acid role is filled by Ser64. Ser64 carries the pyruvic acid (Ser); by autocatalysis modification. Catalysis depends on His69, which acts as the Proton acceptor; for processing activity. Cys84 acts as the Proton donor; for catalytic activity in catalysis.

This sequence belongs to the prokaryotic AdoMetDC family. Type 1 subfamily. As to quaternary structure, heterotetramer of two alpha and two beta chains arranged as a dimer of alpha/beta heterodimers. Pyruvate is required as a cofactor. Post-translationally, is synthesized initially as an inactive proenzyme. Formation of the active enzyme involves a self-maturation process in which the active site pyruvoyl group is generated from an internal serine residue via an autocatalytic post-translational modification. Two non-identical subunits are generated from the proenzyme in this reaction, and the pyruvate is formed at the N-terminus of the alpha chain, which is derived from the carboxyl end of the proenzyme. The post-translation cleavage follows an unusual pathway, termed non-hydrolytic serinolysis, in which the side chain hydroxyl group of the serine supplies its oxygen atom to form the C-terminus of the beta chain, while the remainder of the serine residue undergoes an oxidative deamination to produce ammonia and the pyruvoyl group blocking the N-terminus of the alpha chain.

The enzyme catalyses S-adenosyl-L-methionine + H(+) = S-adenosyl 3-(methylsulfanyl)propylamine + CO2. It functions in the pathway amine and polyamine biosynthesis; S-adenosylmethioninamine biosynthesis; S-adenosylmethioninamine from S-adenosyl-L-methionine: step 1/1. Catalyzes the decarboxylation of S-adenosylmethionine to S-adenosylmethioninamine (dcAdoMet), the propylamine donor required for the synthesis of the polyamines spermine and spermidine from the diamine putrescine. In Thermoplasma volcanium (strain ATCC 51530 / DSM 4299 / JCM 9571 / NBRC 15438 / GSS1), this protein is S-adenosylmethionine decarboxylase proenzyme.